We begin with the raw amino-acid sequence, 144 residues long: Fluoride-specific ion channel FluC 1 (144 aa).

Helical transmembrane passes span 11 to 31, 44 to 64, 74 to 94, and 107 to 127; these read LIYI…YYLG, LATL…TTYI, VITG…TFSV, and IAFL…GLGY. The Na(+) site is built by G84 and T87.

Belongs to the fluoride channel Fluc/FEX (TC 1.A.43) family.

The protein localises to the cell membrane. The catalysed reaction is fluoride(in) = fluoride(out). Its activity is regulated as follows. Na(+) is not transported, but it plays an essential structural role and its presence is essential for fluoride channel function. Fluoride-specific ion channel. Important for reducing fluoride concentration in the cell, thus reducing its toxicity. This chain is Fluoride-specific ion channel FluC 1, found in Bacillus cereus (strain ATCC 14579 / DSM 31 / CCUG 7414 / JCM 2152 / NBRC 15305 / NCIMB 9373 / NCTC 2599 / NRRL B-3711).